The chain runs to 51 residues: MAAKKSFKIKQKLAKAKNQNRPLPQWFRLKTNNTIRYNAKRRHWRRTKMGI.

Residues 1-15 show a composition bias toward basic residues; sequence MAAKKSFKIKQKLAK. The segment at 1–21 is disordered; sequence MAAKKSFKIKQKLAKAKNQNR.

The protein belongs to the eukaryotic ribosomal protein eL39 family. Interacts with YIH1.

The sequence is that of Large ribosomal subunit protein eL39 (RPL39) from Eremothecium gossypii (strain ATCC 10895 / CBS 109.51 / FGSC 9923 / NRRL Y-1056) (Yeast).